A 485-amino-acid chain; its full sequence is Zinc finger protein 165 (485 aa).

K23 participates in a covalent cross-link: Glycyl lysine isopeptide (Lys-Gly) (interchain with G-Cter in SUMO2). The SCAN box domain maps to 62 to 127 (GPREALSRLR…EEAVTILEDL (66 aa)). Glycyl lysine isopeptide (Lys-Gly) (interchain with G-Cter in SUMO2) cross-links involve residues K162 and K195. A C2H2-type 1; degenerate zinc finger spans residues 290–314 (KSCKHGTCDQSFKWNSDFINHQIIY). 5 C2H2-type zinc fingers span residues 344–366 (HQCN…QRIH), 372–394 (YECN…RRIH), 400–422 (FGCK…QRIH), 428–450 (YECS…FRIH), and 456–478 (YECS…QRIH).

It belongs to the krueppel C2H2-type zinc-finger protein family. Expressed specifically in testis.

It localises to the nucleus. Its function is as follows. May be involved in transcriptional regulation. The chain is Zinc finger protein 165 (ZNF165) from Homo sapiens (Human).